Reading from the N-terminus, the 701-residue chain is Translation factor GUF1, mitochondrial (701 aa).

A mitochondrion-targeting transit peptide spans 1-29 (MSCCKGLTPQCVRVRLPRRPALSHPARLY). Low complexity predominate over residues 23–50 (SHPARLYSSSSSSNSHSSPSRPRLLSRP). Residues 23–85 (SHPARLYSSS…RSSHHSSAPM (63 aa)) are disordered. One can recognise a tr-type G domain in the interval 98-283 (ERYRNFCVIA…AVIEQIPHPT (186 aa)). GTP is bound by residues 107–114 (AHVDHGKS), 172–176 (DTPGH), and 226–229 (NKID).

It belongs to the TRAFAC class translation factor GTPase superfamily. Classic translation factor GTPase family. LepA subfamily.

It localises to the mitochondrion inner membrane. The enzyme catalyses GTP + H2O = GDP + phosphate + H(+). In terms of biological role, promotes mitochondrial protein synthesis. May act as a fidelity factor of the translation reaction, by catalyzing a one-codon backward translocation of tRNAs on improperly translocated ribosomes. Binds to mitochondrial ribosomes in a GTP-dependent manner. The protein is Translation factor GUF1, mitochondrial of Pyricularia oryzae (strain 70-15 / ATCC MYA-4617 / FGSC 8958) (Rice blast fungus).